The sequence spans 328 residues: Carbonic anhydrase-related protein 11 (328 aa).

The N-terminal stretch at 1-22 (MGAAARLSAPRALVLWAALGAA) is a signal peptide. The region spanning 33 to 303 (DWWSYKDNLQ…LAHRALRGNR (271 aa)) is the Alpha-carbonic anhydrase domain. Asparagine 118, asparagine 170, and asparagine 260 each carry an N-linked (GlcNAc...) asparagine glycan. The disordered stretch occupies residues 300-328 (RGNRDPRHPERRCRGPNYRLHVDGAPHGR). The span at 319-328 (LHVDGAPHGR) shows a compositional bias: basic and acidic residues.

This sequence belongs to the alpha-carbonic anhydrase family.

It localises to the secreted. In terms of biological role, does not have a catalytic activity. The chain is Carbonic anhydrase-related protein 11 (CA11) from Bos taurus (Bovine).